Consider the following 117-residue polypeptide: DNA-directed RNA polymerase subunit omega (117 aa).

Positions 96 to 105 (KEEAEEEAKQ) are enriched in basic and acidic residues. Residues 96–117 (KEEAEEEAKQKNSRAAKAAAAE) are disordered. A compositionally biased stretch (low complexity) spans 108–117 (SRAAKAAAAE).

It belongs to the RNA polymerase subunit omega family. As to quaternary structure, the RNAP catalytic core consists of 2 alpha, 1 beta, 1 beta' and 1 omega subunit. When a sigma factor is associated with the core the holoenzyme is formed, which can initiate transcription.

The catalysed reaction is RNA(n) + a ribonucleoside 5'-triphosphate = RNA(n+1) + diphosphate. In terms of biological role, promotes RNA polymerase assembly. Latches the N- and C-terminal regions of the beta' subunit thereby facilitating its interaction with the beta and alpha subunits. The polypeptide is DNA-directed RNA polymerase subunit omega (rpoZ) (Lactococcus lactis subsp. lactis (strain IL1403) (Streptococcus lactis)).